The chain runs to 259 residues: Phosphoadenosine 5'-phosphosulfate reductase (259 aa).

Cys-244 acts as the Nucleophile; cysteine thiosulfonate intermediate in catalysis.

This sequence belongs to the PAPS reductase family. CysH subfamily.

Its subcellular location is the cytoplasm. The catalysed reaction is [thioredoxin]-disulfide + sulfite + adenosine 3',5'-bisphosphate + 2 H(+) = [thioredoxin]-dithiol + 3'-phosphoadenylyl sulfate. The protein operates within sulfur metabolism; hydrogen sulfide biosynthesis; sulfite from sulfate: step 3/3. Functionally, catalyzes the formation of sulfite from phosphoadenosine 5'-phosphosulfate (PAPS) using thioredoxin as an electron donor. This Vibrio parahaemolyticus serotype O3:K6 (strain RIMD 2210633) protein is Phosphoadenosine 5'-phosphosulfate reductase.